Consider the following 115-residue polypeptide: ER exit protein (115 aa).

This sequence belongs to the STEEP1 family.

Its function is as follows. May stimulate membrane curvature formation and subsequent endoplasmic reticulum exit site (ERES) establishment. This Schizosaccharomyces pombe (strain 972 / ATCC 24843) (Fission yeast) protein is ER exit protein.